The primary structure comprises 281 residues: Clc-like protein 5 (281 aa).

Helical transmembrane passes span 13-33 (LATL…TITP), 104-124 (VLIL…AVIF), 137-157 (IMLD…LIVF), and 184-204 (YYLA…AALV).

The protein belongs to the Clc family.

The protein localises to the membrane. The chain is Clc-like protein 5 (clc-5) from Caenorhabditis elegans.